We begin with the raw amino-acid sequence, 447 residues long: Phosphoglucosamine mutase (447 aa).

Residue serine 102 is the Phosphoserine intermediate of the active site. Residues serine 102, aspartate 241, aspartate 243, and aspartate 245 each contribute to the Mg(2+) site. Serine 102 carries the post-translational modification Phosphoserine.

It belongs to the phosphohexose mutase family. It depends on Mg(2+) as a cofactor. Activated by phosphorylation.

It catalyses the reaction alpha-D-glucosamine 1-phosphate = D-glucosamine 6-phosphate. Catalyzes the conversion of glucosamine-6-phosphate to glucosamine-1-phosphate. The protein is Phosphoglucosamine mutase of Pseudomonas syringae pv. syringae (strain B728a).